The primary structure comprises 260 residues: Flap endonuclease Xni (260 aa).

D112 contacts Mg(2+). Positions 168 to 258 (LQPSQLVDFW…FNLKDLRYTP (91 aa)) constitute a 5'-3' exonuclease domain. 3 residues coordinate K(+): L179, V190, and I193. The tract at residues 192–197 (GIGEKT) is interaction with DNA.

This sequence belongs to the Xni family. Mg(2+) serves as cofactor. K(+) is required as a cofactor.

Functionally, has flap endonuclease activity. During DNA replication, flap endonucleases cleave the 5'-overhanging flap structure that is generated by displacement synthesis when DNA polymerase encounters the 5'-end of a downstream Okazaki fragment. This Tolumonas auensis (strain DSM 9187 / NBRC 110442 / TA 4) protein is Flap endonuclease Xni.